The chain runs to 175 residues: Adenine phosphoribosyltransferase (175 aa).

It belongs to the purine/pyrimidine phosphoribosyltransferase family. In terms of assembly, homodimer.

It localises to the cytoplasm. It carries out the reaction AMP + diphosphate = 5-phospho-alpha-D-ribose 1-diphosphate + adenine. Its pathway is purine metabolism; AMP biosynthesis via salvage pathway; AMP from adenine: step 1/1. Catalyzes a salvage reaction resulting in the formation of AMP, that is energically less costly than de novo synthesis. The protein is Adenine phosphoribosyltransferase of Lactobacillus gasseri (strain ATCC 33323 / DSM 20243 / BCRC 14619 / CIP 102991 / JCM 1131 / KCTC 3163 / NCIMB 11718 / NCTC 13722 / AM63).